A 209-amino-acid polypeptide reads, in one-letter code: Ribosomal RNA large subunit methyltransferase E (209 aa).

5 residues coordinate S-adenosyl-L-methionine: G63, W65, D83, D99, and D124. K164 functions as the Proton acceptor in the catalytic mechanism.

The protein belongs to the class I-like SAM-binding methyltransferase superfamily. RNA methyltransferase RlmE family.

It localises to the cytoplasm. The catalysed reaction is uridine(2552) in 23S rRNA + S-adenosyl-L-methionine = 2'-O-methyluridine(2552) in 23S rRNA + S-adenosyl-L-homocysteine + H(+). In terms of biological role, specifically methylates the uridine in position 2552 of 23S rRNA at the 2'-O position of the ribose in the fully assembled 50S ribosomal subunit. This is Ribosomal RNA large subunit methyltransferase E from Shewanella frigidimarina (strain NCIMB 400).